The following is a 149-amino-acid chain: D-aminoacyl-tRNA deacylase (149 aa).

A Gly-cisPro motif, important for rejection of L-amino acids motif is present at residues 137-138; the sequence is GP.

It belongs to the DTD family. Homodimer.

Its subcellular location is the cytoplasm. It catalyses the reaction glycyl-tRNA(Ala) + H2O = tRNA(Ala) + glycine + H(+). It carries out the reaction a D-aminoacyl-tRNA + H2O = a tRNA + a D-alpha-amino acid + H(+). Functionally, an aminoacyl-tRNA editing enzyme that deacylates mischarged D-aminoacyl-tRNAs. Also deacylates mischarged glycyl-tRNA(Ala), protecting cells against glycine mischarging by AlaRS. Acts via tRNA-based rather than protein-based catalysis; rejects L-amino acids rather than detecting D-amino acids in the active site. By recycling D-aminoacyl-tRNA to D-amino acids and free tRNA molecules, this enzyme counteracts the toxicity associated with the formation of D-aminoacyl-tRNA entities in vivo and helps enforce protein L-homochirality. In Anaeromyxobacter dehalogenans (strain 2CP-C), this protein is D-aminoacyl-tRNA deacylase.